The chain runs to 146 residues: Acidic phospholipase A2 CM-II (146 aa).

A signal peptide spans 1-21 (MNPAHLLILAAVCVSPLGAFS). Positions 22 to 27 (NRPMPL) are excised as a propeptide. Cystine bridges form between C38/C98, C53/C145, C55/C71, C70/C126, C77/C119, C87/C112, and C105/C117. Y54, G56, and G58 together coordinate Ca(2+). H74 is an active-site residue. D75 contributes to the Ca(2+) binding site. D120 is an active-site residue.

This sequence belongs to the phospholipase A2 family. Group I subfamily. D49 sub-subfamily. Ca(2+) is required as a cofactor. In terms of tissue distribution, expressed by the venom gland.

The protein resides in the secreted. It catalyses the reaction a 1,2-diacyl-sn-glycero-3-phosphocholine + H2O = a 1-acyl-sn-glycero-3-phosphocholine + a fatty acid + H(+). In terms of biological role, PLA2 catalyzes the calcium-dependent hydrolysis of the 2-acyl groups in 3-sn-phosphoglycerides. Is able to suppress the acetylcholine (ACh)-evoked current mediated by alpha-7 (CHRNA7)-similar nAChRs in L.stagnalis neurons (IC(50)=37 nM) and to compete with alpha-bungarotoxin for binding to muscle- and alpha-7 neuronal nAChR types, as well as to AChBPs. In inhibition of alpha-bungarotoxin binding, this toxin is similarly active against T.californica nAChR (IC(50)=1.2 uM), human alpha-7 nAChR (IC(50)=3.2 uM), and L.stagnalis AChBP (IC(50)=1.0 uM), whereas it is not active against A.californica AChBP (IC(50)&gt;100 uM). This is Acidic phospholipase A2 CM-II from Naja kaouthia (Monocled cobra).